The chain runs to 639 residues: Probable potassium transport system protein Kup 1 (639 aa).

12 helical membrane-spanning segments follow: residues 27 to 47 (AILG…LYAF), 64 to 84 (VIGL…FKYI), 115 to 135 (VLIV…MITP), 151 to 171 (PAMD…LFAI), 182 to 202 (FFGP…LIHI), 225 to 245 (GFYG…AEAL), 261 to 281 (WFCL…ALVL), 293 to 313 (LMFP…ATII), 351 to 371 (IYLP…VLTF), 377 to 397 (LATA…LMFF), 408 to 428 (IWLA…FLGA), and 430 to 450 (LLKI…FTVI).

It belongs to the HAK/KUP transporter (TC 2.A.72) family.

The protein localises to the cell inner membrane. It carries out the reaction K(+)(in) + H(+)(in) = K(+)(out) + H(+)(out). Its function is as follows. Transport of potassium into the cell. Likely operates as a K(+):H(+) symporter. This chain is Probable potassium transport system protein Kup 1, found in Agrobacterium fabrum (strain C58 / ATCC 33970) (Agrobacterium tumefaciens (strain C58)).